The sequence spans 110 residues: UPF0122 protein LMOf2365_1829 (110 aa).

The protein belongs to the UPF0122 family.

Might take part in the signal recognition particle (SRP) pathway. This is inferred from the conservation of its genetic proximity to ftsY/ffh. May be a regulatory protein. The chain is UPF0122 protein LMOf2365_1829 from Listeria monocytogenes serotype 4b (strain F2365).